The primary structure comprises 128 residues: Photosystem II reaction center Psb28 protein (128 aa).

A disordered region spans residues 109–128; the sequence is SGLGYSQDSGEAPASDSSNG. Residues 111-128 are compositionally biased toward polar residues; it reads LGYSQDSGEAPASDSSNG.

The protein belongs to the Psb28 family. Part of the photosystem II complex.

Its subcellular location is the cellular thylakoid membrane. This chain is Photosystem II reaction center Psb28 protein, found in Synechococcus sp. (strain CC9311).